The chain runs to 598 residues: Proline--tRNA ligase (598 aa).

This sequence belongs to the class-II aminoacyl-tRNA synthetase family. ProS type 1 subfamily. In terms of assembly, homodimer.

It is found in the cytoplasm. The catalysed reaction is tRNA(Pro) + L-proline + ATP = L-prolyl-tRNA(Pro) + AMP + diphosphate. Catalyzes the attachment of proline to tRNA(Pro) in a two-step reaction: proline is first activated by ATP to form Pro-AMP and then transferred to the acceptor end of tRNA(Pro). As ProRS can inadvertently accommodate and process non-cognate amino acids such as alanine and cysteine, to avoid such errors it has two additional distinct editing activities against alanine. One activity is designated as 'pretransfer' editing and involves the tRNA(Pro)-independent hydrolysis of activated Ala-AMP. The other activity is designated 'posttransfer' editing and involves deacylation of mischarged Ala-tRNA(Pro). The misacylated Cys-tRNA(Pro) is not edited by ProRS. The protein is Proline--tRNA ligase of Rippkaea orientalis (strain PCC 8801 / RF-1) (Cyanothece sp. (strain PCC 8801)).